The following is a 303-amino-acid chain: MALLRETERADGVAPVGEHVILRLKAHLDVVHQIEPVQADVPGSEHFVVRDSGGELAGYAHVDTAEEKTAGQLVAELAVHPRHRRRGAGARLVEALLDRADLPVEPSPDDTDTARLRIWSHGEHPGALRLAERYGLVRARELWRMGRPLDTELAEAELPPGVTIRAFRTGVDEPAVVRVNHRAFSWHPEQGAMTEDDLRLKEREDWFDPAGFLLAVDSHDTLLGFHWTKIHPDGTGEVYVVGVDPDTQGNGLGRSLTVAGLRHLRAKGCAQVMLYVEADNTAAIKVYQRLEFARWDTDVQFGR.

N-acetyltransferase domains are found at residues 1 to 150 (MALL…RPLD) and 162 to 303 (VTIR…QFGR). Residue glutamate 18 coordinates 1D-myo-inositol 2-(L-cysteinylamino)-2-deoxy-alpha-D-glucopyranoside. 77-79 (LAV) contributes to the acetyl-CoA binding site. Glutamate 189, lysine 229, and glutamate 237 together coordinate 1D-myo-inositol 2-(L-cysteinylamino)-2-deoxy-alpha-D-glucopyranoside. Residues 241–243 (VGV) and 248–254 (QGNGLGR) contribute to the acetyl-CoA site. Tyrosine 275 provides a ligand contact to 1D-myo-inositol 2-(L-cysteinylamino)-2-deoxy-alpha-D-glucopyranoside. 280–285 (NTAAIK) lines the acetyl-CoA pocket.

The protein belongs to the acetyltransferase family. MshD subfamily. In terms of assembly, monomer.

The enzyme catalyses 1D-myo-inositol 2-(L-cysteinylamino)-2-deoxy-alpha-D-glucopyranoside + acetyl-CoA = mycothiol + CoA + H(+). In terms of biological role, catalyzes the transfer of acetyl from acetyl-CoA to desacetylmycothiol (Cys-GlcN-Ins) to form mycothiol. The chain is Mycothiol acetyltransferase from Saccharopolyspora erythraea (strain ATCC 11635 / DSM 40517 / JCM 4748 / NBRC 13426 / NCIMB 8594 / NRRL 2338).